We begin with the raw amino-acid sequence, 134 residues long: Arsenate reductase (134 aa).

Catalysis depends on nucleophile residues Cys11, Cys83, and Cys90. Intrachain disulfides connect Cys11/Cys83 and Cys83/Cys90.

The protein belongs to the low molecular weight phosphotyrosine protein phosphatase family. Thioredoxin-coupled ArsC subfamily.

The protein localises to the cytoplasm. It carries out the reaction arsenate + [thioredoxin]-dithiol + H(+) = arsenite + [thioredoxin]-disulfide + H2O. Catalyzes the reduction of arsenate [As(V)] to arsenite [As(III)]. This Bacillus cereus (strain ATCC 14579 / DSM 31 / CCUG 7414 / JCM 2152 / NBRC 15305 / NCIMB 9373 / NCTC 2599 / NRRL B-3711) protein is Arsenate reductase.